The sequence spans 433 residues: Serine carboxypeptidase-like 11 (433 aa).

Positions 1–21 (MELTLKLLVLLLFILNHHVGS) are cleaved as a signal peptide. 3 disulfide bridges follow: Cys80-Cys322, Cys243-Cys257, and Cys281-Cys288. N-linked (GlcNAc...) asparagine glycosylation occurs at Asn101. Residue Ser176 is part of the active site. A glycan (N-linked (GlcNAc...) asparagine) is linked at Asn342. Residue Asp358 is part of the active site. An N-linked (GlcNAc...) asparagine glycan is attached at Asn374. The active site involves His411.

It belongs to the peptidase S10 family. As to expression, ubiquitous.

It is found in the secreted. Functionally, probable carboxypeptidase. In Arabidopsis thaliana (Mouse-ear cress), this protein is Serine carboxypeptidase-like 11 (SCPL11).